The primary structure comprises 100 residues: MKLLPREIDKLLLFTAALLAERRKKRGLKLNYPEAIALISFVVLEGARDGKNVAELMEIGRNVLSKDDVIPGVSEMISNVQIEATFLDGTKLVTIHDPII.

This sequence belongs to the urease gamma subunit family. Heterotrimer of UreA (gamma), UreB (beta) and UreC (alpha) subunits. Three heterotrimers associate to form the active enzyme.

It is found in the cytoplasm. It catalyses the reaction urea + 2 H2O + H(+) = hydrogencarbonate + 2 NH4(+). Its pathway is nitrogen metabolism; urea degradation; CO(2) and NH(3) from urea (urease route): step 1/1. This chain is Urease subunit gamma, found in Blochmanniella floridana.